We begin with the raw amino-acid sequence, 297 residues long: Homoserine kinase (297 aa).

82 to 92 contacts ATP; it reads PVSRGLGSSAA.

Belongs to the GHMP kinase family. Homoserine kinase subfamily.

The protein resides in the cytoplasm. The enzyme catalyses L-homoserine + ATP = O-phospho-L-homoserine + ADP + H(+). It participates in amino-acid biosynthesis; L-threonine biosynthesis; L-threonine from L-aspartate: step 4/5. Its function is as follows. Catalyzes the ATP-dependent phosphorylation of L-homoserine to L-homoserine phosphate. This is Homoserine kinase from Clostridium botulinum (strain Langeland / NCTC 10281 / Type F).